Here is a 249-residue protein sequence, read N- to C-terminus: Uridylate kinase (249 aa).

15 to 18 (KLSG) contacts ATP. The segment at 23-28 (GEEGFG) is involved in allosteric activation by GTP. Gly57 contacts UMP. Residues Gly58 and Arg62 each coordinate ATP. UMP contacts are provided by residues Asp77 and 138-145 (TGNPFFTT). ATP is bound by residues Thr165, Phe171, and Asp174.

Belongs to the UMP kinase family. Homohexamer.

Its subcellular location is the cytoplasm. It catalyses the reaction UMP + ATP = UDP + ADP. The protein operates within pyrimidine metabolism; CTP biosynthesis via de novo pathway; UDP from UMP (UMPK route): step 1/1. Its activity is regulated as follows. Allosterically activated by GTP. Inhibited by UTP. In terms of biological role, catalyzes the reversible phosphorylation of UMP to UDP. The sequence is that of Uridylate kinase from Psychromonas ingrahamii (strain DSM 17664 / CCUG 51855 / 37).